We begin with the raw amino-acid sequence, 397 residues long: Elongation factor Tu (397 aa).

The tr-type G domain occupies 10 to 207; the sequence is LPHVNVGTIG…TLDSYIPEPE (198 aa). The tract at residues 19–26 is G1; that stretch reads GHVDHGKT. Position 19–26 (19–26) interacts with GTP; it reads GHVDHGKT. Position 26 (Thr26) interacts with Mg(2+). Residues 60–64 form a G2 region; the sequence is GITIN. The tract at residues 81 to 84 is G3; sequence DCPG. Residues 81-85 and 136-139 contribute to the GTP site; these read DCPGH and NKAD. The segment at 136–139 is G4; that stretch reads NKAD. The segment at 174 to 176 is G5; sequence SAR.

Belongs to the TRAFAC class translation factor GTPase superfamily. Classic translation factor GTPase family. EF-Tu/EF-1A subfamily. In terms of assembly, monomer.

It localises to the cytoplasm. The enzyme catalyses GTP + H2O = GDP + phosphate + H(+). Its function is as follows. GTP hydrolase that promotes the GTP-dependent binding of aminoacyl-tRNA to the A-site of ribosomes during protein biosynthesis. The protein is Elongation factor Tu of Pseudomonas fluorescens (strain Pf0-1).